The following is a 241-amino-acid chain: DnaA regulatory inactivator Hda (241 aa).

The protein belongs to the DnaA family. HdA subfamily. The active form seems to be an ADP-bound monomer. Forms the RIDA complex (regulatory inactivation of DnaA) of ATP-DnaA, ADP-Hda and the DNA-loaded beta sliding clamp (dnaN).

Its function is as follows. Mediates the interaction of DNA replication initiator protein DnaA with DNA polymerase subunit beta sliding clamp (dnaN). Stimulates hydrolysis of ATP-DnaA to ADP-DnaA, rendering DnaA inactive for reinitiation, a process called regulatory inhibition of DnaA or RIDA. This Salmonella agona (strain SL483) protein is DnaA regulatory inactivator Hda.